The following is a 96-amino-acid chain: Protein Vpr (96 aa).

The segment at 1–42 is homooligomerization; sequence MEQPPEDQGPQREPYNEWTLELLEELKNEAVRHFPREYLHGL. A phosphoserine; by host mark is found at Ser79, Ser94, and Ser96.

Belongs to the HIV-1 VPR protein family. Homooligomer, may form homodimer. Interacts with p6-gag region of the Pr55 Gag precursor protein through a (Leu-X-X)4 motif near the C-terminus of the P6gag protein. Interacts with host UNG. May interact with host RAD23A/HHR23A. Interacts with host VPRBP/DCAF1, leading to hijack the CUL4A-RBX1-DDB1-DCAF1/VPRBP complex, mediating ubiquitination of host proteins such as TERT and ZGPAT and arrest of the cell cycle in G2 phase. Post-translationally, phosphorylated on several residues by host. These phosphorylations regulate VPR activity for the nuclear import of the HIV-1 pre-integration complex.

Its subcellular location is the virion. It is found in the host nucleus. It localises to the host extracellular space. In terms of biological role, during virus replication, may deplete host UNG protein, and incude G2-M cell cycle arrest. Acts by targeting specific host proteins for degradation by the 26S proteasome, through association with the cellular CUL4A-DDB1 E3 ligase complex by direct interaction with host VPRPB/DCAF-1. Cell cycle arrest reportedly occurs within hours of infection and is not blocked by antiviral agents, suggesting that it is initiated by the VPR carried into the virion. Additionally, VPR induces apoptosis in a cell cycle dependent manner suggesting that these two effects are mechanistically linked. Detected in the serum and cerebrospinal fluid of AIDS patient, VPR may also induce cell death to bystander cells. Its function is as follows. During virus entry, plays a role in the transport of the viral pre-integration (PIC) complex to the host nucleus. This function is crucial for viral infection of non-dividing macrophages. May act directly at the nuclear pore complex, by binding nucleoporins phenylalanine-glycine (FG)-repeat regions. In Homo sapiens (Human), this protein is Protein Vpr.